The primary structure comprises 183 residues: ATP synthase subunit delta (183 aa).

It belongs to the ATPase delta chain family. In terms of assembly, F-type ATPases have 2 components, F(1) - the catalytic core - and F(0) - the membrane proton channel. F(1) has five subunits: alpha(3), beta(3), gamma(1), delta(1), epsilon(1). F(0) has three main subunits: a(1), b(2) and c(10-14). The alpha and beta chains form an alternating ring which encloses part of the gamma chain. F(1) is attached to F(0) by a central stalk formed by the gamma and epsilon chains, while a peripheral stalk is formed by the delta and b chains.

The protein localises to the cell membrane. F(1)F(0) ATP synthase produces ATP from ADP in the presence of a proton or sodium gradient. F-type ATPases consist of two structural domains, F(1) containing the extramembraneous catalytic core and F(0) containing the membrane proton channel, linked together by a central stalk and a peripheral stalk. During catalysis, ATP synthesis in the catalytic domain of F(1) is coupled via a rotary mechanism of the central stalk subunits to proton translocation. In terms of biological role, this protein is part of the stalk that links CF(0) to CF(1). It either transmits conformational changes from CF(0) to CF(1) or is implicated in proton conduction. The polypeptide is ATP synthase subunit delta (Oenococcus oeni (strain ATCC BAA-331 / PSU-1)).